Here is a 163-residue protein sequence, read N- to C-terminus: Transcriptional repressor NrdR (163 aa).

A zinc finger lies at 3-34 (CPSCNSESSRVVDSRSIEMGVSIRRRRECSEC). An ATP-cone domain is found at 46–136 (LLVVKRNGVT…VYKSFNCAED (91 aa)).

It belongs to the NrdR family. Zn(2+) serves as cofactor.

Negatively regulates transcription of bacterial ribonucleotide reductase nrd genes and operons by binding to NrdR-boxes. The chain is Transcriptional repressor NrdR from Corynebacterium jeikeium (strain K411).